We begin with the raw amino-acid sequence, 383 residues long: Arginine biosynthesis bifunctional protein ArgJ 1 (383 aa).

Residues 1 to 25 (MTVTAPKGSTGGGCRRGSKESGQPD) are disordered. Substrate-binding residues include T146, K168, T179, E259, N378, and S383. Residue T179 is the Nucleophile of the active site.

Belongs to the ArgJ family. Heterotetramer of two alpha and two beta chains.

Its subcellular location is the cytoplasm. It catalyses the reaction N(2)-acetyl-L-ornithine + L-glutamate = N-acetyl-L-glutamate + L-ornithine. It carries out the reaction L-glutamate + acetyl-CoA = N-acetyl-L-glutamate + CoA + H(+). It participates in amino-acid biosynthesis; L-arginine biosynthesis; L-ornithine and N-acetyl-L-glutamate from L-glutamate and N(2)-acetyl-L-ornithine (cyclic): step 1/1. It functions in the pathway amino-acid biosynthesis; L-arginine biosynthesis; N(2)-acetyl-L-ornithine from L-glutamate: step 1/4. Its function is as follows. Catalyzes two activities which are involved in the cyclic version of arginine biosynthesis: the synthesis of N-acetylglutamate from glutamate and acetyl-CoA as the acetyl donor, and of ornithine by transacetylation between N(2)-acetylornithine and glutamate. The polypeptide is Arginine biosynthesis bifunctional protein ArgJ 1 (Streptomyces clavuligerus).